We begin with the raw amino-acid sequence, 392 residues long: Imidazolonepropionase (392 aa).

Residues histidine 70 and histidine 72 each coordinate Fe(3+). Zn(2+) contacts are provided by histidine 70 and histidine 72. Arginine 79, tyrosine 137, and histidine 164 together coordinate 4-imidazolone-5-propanoate. Tyrosine 137 is an N-formimidoyl-L-glutamate binding site. Histidine 227 provides a ligand contact to Fe(3+). Histidine 227 serves as a coordination point for Zn(2+). Glutamine 230 contacts 4-imidazolone-5-propanoate. Residue aspartate 301 participates in Fe(3+) binding. Position 301 (aspartate 301) interacts with Zn(2+). N-formimidoyl-L-glutamate contacts are provided by asparagine 303 and glycine 305. Threonine 306 serves as a coordination point for 4-imidazolone-5-propanoate.

The protein belongs to the metallo-dependent hydrolases superfamily. HutI family. The cofactor is Zn(2+). It depends on Fe(3+) as a cofactor.

The protein localises to the cytoplasm. The catalysed reaction is 4-imidazolone-5-propanoate + H2O = N-formimidoyl-L-glutamate. The protein operates within amino-acid degradation; L-histidine degradation into L-glutamate; N-formimidoyl-L-glutamate from L-histidine: step 3/3. Functionally, catalyzes the hydrolytic cleavage of the carbon-nitrogen bond in imidazolone-5-propanoate to yield N-formimidoyl-L-glutamate. It is the third step in the universal histidine degradation pathway. The chain is Imidazolonepropionase from Nocardia farcinica (strain IFM 10152).